The chain runs to 2124 residues: AMB antimetabolite synthetase AmbE (2124 aa).

The adenylation stretch occupies residues leucine 456–isoleucine 847. The methyltransferase stretch occupies residues aspartate 950 to valine 1147. Residues alanine 1251 to alanine 1325 enclose the Carrier 1 domain. Residue serine 1286 is modified to O-(pantetheine 4'-phosphoryl)serine. Residues aspartate 1359–proline 1780 are condensation. The Carrier 2 domain occupies alanine 1785–aspartate 1859. At serine 1819 the chain carries O-(pantetheine 4'-phosphoryl)serine. Residues arginine 1886 to arginine 2107 are thioesterase.

Belongs to the NRP synthetase family. It depends on pantetheine 4'-phosphate as a cofactor.

The enzyme catalyses holo-[peptidyl-carrier protein] + L-glutamate + ATP = L-glutamyl-[peptidyl-carrier protein] + AMP + diphosphate. Involved in the biosynthesis of the antimetabolite L-2-amino-4-methoxy-trans-3-butenoic acid (AMB), a non-proteinogenic amino acid which is toxic for prokaryotes and eukaryotes. Adenylates L-glutamate and loads it onto its first peptidyl carrier domain via a thioester linkage to the phosphopanthetheine moiety. The second peptidyl carrier domain is loaded with a L-alanine activated by AmbB. After formation by AmbB of the L-Glu-L-Ala dipeptide at the first carrier domain of AmbE, the condensation domain of AmbE probably condenses this dipeptide with the L-Ala residue attached at the second carrier domain of AmbE to give the L-Ala-L-Glu-L-Ala tripeptide. The central amino acid, L-Glu, would then undergo a series of modifications to be converted into AMB while the two flanking L-Ala residues remain in place. Finally, the L-Ala-AMB-L-Ala tripeptide is probably released by thioester cleavage via the thioester domain of AmbE. The protein is AMB antimetabolite synthetase AmbE of Pseudomonas aeruginosa (strain ATCC 15692 / DSM 22644 / CIP 104116 / JCM 14847 / LMG 12228 / 1C / PRS 101 / PAO1).